We begin with the raw amino-acid sequence, 335 residues long: Acetyl-coenzyme A carboxylase carboxyl transferase subunit alpha (335 aa).

Positions 48–308 constitute a CoA carboxyltransferase C-terminal domain; it reads VLESKVDALR…KSLLVEELRM (261 aa).

It belongs to the AccA family. In terms of assembly, acetyl-CoA carboxylase is a heterohexamer composed of biotin carboxyl carrier protein (AccB), biotin carboxylase (AccC) and two subunits each of ACCase subunit alpha (AccA) and ACCase subunit beta (AccD).

Its subcellular location is the cytoplasm. The catalysed reaction is N(6)-carboxybiotinyl-L-lysyl-[protein] + acetyl-CoA = N(6)-biotinyl-L-lysyl-[protein] + malonyl-CoA. It participates in lipid metabolism; malonyl-CoA biosynthesis; malonyl-CoA from acetyl-CoA: step 1/1. Functionally, component of the acetyl coenzyme A carboxylase (ACC) complex. First, biotin carboxylase catalyzes the carboxylation of biotin on its carrier protein (BCCP) and then the CO(2) group is transferred by the carboxyltransferase to acetyl-CoA to form malonyl-CoA. The chain is Acetyl-coenzyme A carboxylase carboxyl transferase subunit alpha from Chlorobium phaeobacteroides (strain BS1).